A 311-amino-acid polypeptide reads, in one-letter code: tRNA dimethylallyltransferase (311 aa).

Residue 9-16 participates in ATP binding; it reads GPTAVGKT. 11–16 serves as a coordination point for substrate; it reads TAVGKT. Residues 34-37 are interaction with substrate tRNA; sequence DSMQ.

This sequence belongs to the IPP transferase family. Monomer. It depends on Mg(2+) as a cofactor.

The catalysed reaction is adenosine(37) in tRNA + dimethylallyl diphosphate = N(6)-dimethylallyladenosine(37) in tRNA + diphosphate. Catalyzes the transfer of a dimethylallyl group onto the adenine at position 37 in tRNAs that read codons beginning with uridine, leading to the formation of N6-(dimethylallyl)adenosine (i(6)A). The protein is tRNA dimethylallyltransferase of Clostridium botulinum (strain Okra / Type B1).